The chain runs to 114 residues: MIVPFGHVLLLAGALFGLGVFCAVARRNLIMIVLGVEIMLNAASIAFIGAAARWQSMEGQAFVLFILAVAATEVSIGLAIIVYAFRRTGSFDPAAYNLMKAGDAMQSFERRGPQ.

The next 3 helical transmembrane spans lie at 1–21 (MIVPFGHVLLLAGALFGLGVF), 29–49 (LIMIVLGVEIMLNAASIAFIG), and 62–82 (FVLFILAVAATEVSIGLAIIV).

This sequence belongs to the complex I subunit 4L family. In terms of assembly, NDH-1 is composed of 14 different subunits. Subunits NuoA, H, J, K, L, M, N constitute the membrane sector of the complex.

Its subcellular location is the cell inner membrane. It catalyses the reaction a quinone + NADH + 5 H(+)(in) = a quinol + NAD(+) + 4 H(+)(out). Its function is as follows. NDH-1 shuttles electrons from NADH, via FMN and iron-sulfur (Fe-S) centers, to quinones in the respiratory chain. The immediate electron acceptor for the enzyme in this species is believed to be ubiquinone. Couples the redox reaction to proton translocation (for every two electrons transferred, four hydrogen ions are translocated across the cytoplasmic membrane), and thus conserves the redox energy in a proton gradient. This chain is NADH-quinone oxidoreductase subunit K 2, found in Syntrophobacter fumaroxidans (strain DSM 10017 / MPOB).